A 104-amino-acid chain; its full sequence is N(2)-fixation sustaining protein CowN (104 aa).

The protein belongs to the CowN family.

Its function is as follows. Is required to sustain N(2)-dependent growth in the presence of low levels of carbon monoxide (CO). Probably acts by protecting the N(2) fixation ability of the nitrogenase complex, which is inactivated in the presence of CO. The chain is N(2)-fixation sustaining protein CowN from Arcobacter nitrofigilis (strain ATCC 33309 / DSM 7299 / CCUG 15893 / LMG 7604 / NCTC 12251 / CI) (Campylobacter nitrofigilis).